Here is a 284-residue protein sequence, read N- to C-terminus: Bifunctional protein FolD (284 aa).

NADP(+)-binding positions include 166–168 (GAS) and Ile-232.

The protein belongs to the tetrahydrofolate dehydrogenase/cyclohydrolase family. Homodimer.

It carries out the reaction (6R)-5,10-methylene-5,6,7,8-tetrahydrofolate + NADP(+) = (6R)-5,10-methenyltetrahydrofolate + NADPH. It catalyses the reaction (6R)-5,10-methenyltetrahydrofolate + H2O = (6R)-10-formyltetrahydrofolate + H(+). It functions in the pathway one-carbon metabolism; tetrahydrofolate interconversion. Its function is as follows. Catalyzes the oxidation of 5,10-methylenetetrahydrofolate to 5,10-methenyltetrahydrofolate and then the hydrolysis of 5,10-methenyltetrahydrofolate to 10-formyltetrahydrofolate. The chain is Bifunctional protein FolD from Shewanella frigidimarina (strain NCIMB 400).